Reading from the N-terminus, the 406-residue chain is Peptidase T (406 aa).

Residue histidine 78 coordinates Zn(2+). Aspartate 80 is an active-site residue. Aspartate 139 serves as a coordination point for Zn(2+). Catalysis depends on glutamate 173, which acts as the Proton acceptor. Residues glutamate 174, aspartate 196, and histidine 378 each contribute to the Zn(2+) site.

Belongs to the peptidase M20B family. Zn(2+) serves as cofactor.

It is found in the cytoplasm. The enzyme catalyses Release of the N-terminal residue from a tripeptide.. Cleaves the N-terminal amino acid of tripeptides. This is Peptidase T from Clostridium perfringens (strain ATCC 13124 / DSM 756 / JCM 1290 / NCIMB 6125 / NCTC 8237 / Type A).